The sequence spans 180 residues: MHNLLSRANSLLAFTLWVMAAVTAACFLSTVFLDYTVSNHLEVNDIKIRNVRDYATDDKQADLATLAFNLKVDFSRLFNWNVKQLFVYLVAEYKSAENAVNQVVIWDRIVERAERVVMDEIGVKTKYYFLDDGAHLLKHDNVTFVLRYNVIPNAGYLRLVQSTNQLVVPFPTTYTTTRRS.

Residues 1–12 (MHNLLSRANSLL) are Cytoplasmic-facing. The helical; Signal-anchor for type II membrane protein transmembrane segment at 13-33 (AFTLWVMAAVTAACFLSTVFL) threads the bilayer. The Lumenal segment spans residues 34–180 (DYTVSNHLEV…PTTYTTTRRS (147 aa)). Asn141 is a glycosylation site (N-linked (GlcNAc...) asparagine).

The protein belongs to the SPCS3 family. In terms of assembly, component of the signal peptidase complex (SPC) composed of a catalytic subunit sec-11 and three accessory subunits spcs-1, spcs-2 and spcs-3. The complex induces a local thinning of the ER membrane which is used to measure the length of the signal peptide (SP) h-region of protein substrates. This ensures the selectivity of the complex towards h-regions shorter than 18-20 amino acids.

It localises to the endoplasmic reticulum membrane. Essential component of the signal peptidase complex (SPC) which catalyzes the cleavage of N-terminal signal sequences from nascent proteins as they are translocated into the lumen of the endoplasmic reticulum. Essential for the SPC catalytic activity, possibly by stabilizing and positioning the active center of the complex close to the lumenal surface. The polypeptide is Signal peptidase complex subunit 3 (Caenorhabditis briggsae).